Here is an 87-residue protein sequence, read N- to C-terminus: U3-theraphotoxin-Hhn1o (87 aa).

The N-terminal stretch at 1–24 (MVNMKASMFLTFAGLVLLFVVCYA) is a signal peptide. Positions 25–52 (SESEEKEFPKEMLSSIFAVDNDFKQEER) are excised as a propeptide. Disulfide bonds link Cys54–Cys67 and Cys61–Cys72.

It belongs to the neurotoxin 10 (Hwtx-1) family. 51 (Hntx-8) subfamily. Hntx-8 sub-subfamily. Expressed by the venom gland.

The protein localises to the secreted. Ion channel inhibitor. In Cyriopagopus hainanus (Chinese bird spider), this protein is U3-theraphotoxin-Hhn1o.